The sequence spans 313 residues: ADP-L-glycero-D-manno-heptose-6-epimerase (313 aa).

Residues 10-11 (MI), 31-32 (DN), Lys38, Arg53, 75-79 (EGACS), and Asn92 each bind NADP(+). The active-site Proton acceptor is Tyr139. Lys143 provides a ligand contact to NADP(+). Asn174 contributes to the substrate binding site. NADP(+) is bound by residues Val175 and Lys183. Lys183 acts as the Proton acceptor in catalysis. Residues Ser185, His192, 206–209 (FAGS), Arg214, and Tyr277 each bind substrate.

This sequence belongs to the NAD(P)-dependent epimerase/dehydratase family. HldD subfamily. As to quaternary structure, homopentamer. It depends on NADP(+) as a cofactor.

It catalyses the reaction ADP-D-glycero-beta-D-manno-heptose = ADP-L-glycero-beta-D-manno-heptose. Its pathway is nucleotide-sugar biosynthesis; ADP-L-glycero-beta-D-manno-heptose biosynthesis; ADP-L-glycero-beta-D-manno-heptose from D-glycero-beta-D-manno-heptose 7-phosphate: step 4/4. It participates in bacterial outer membrane biogenesis; LPS core biosynthesis. Its function is as follows. Catalyzes the interconversion between ADP-D-glycero-beta-D-manno-heptose and ADP-L-glycero-beta-D-manno-heptose via an epimerization at carbon 6 of the heptose. This chain is ADP-L-glycero-D-manno-heptose-6-epimerase, found in Vibrio vulnificus (strain YJ016).